The chain runs to 59 residues: Large ribosomal subunit protein uL30 (59 aa).

It belongs to the universal ribosomal protein uL30 family. Part of the 50S ribosomal subunit.

In Streptococcus agalactiae serotype Ia (strain ATCC 27591 / A909 / CDC SS700), this protein is Large ribosomal subunit protein uL30.